The following is a 185-amino-acid chain: Ribosome-recycling factor (185 aa).

It belongs to the RRF family.

Its subcellular location is the cytoplasm. Its function is as follows. Responsible for the release of ribosomes from messenger RNA at the termination of protein biosynthesis. May increase the efficiency of translation by recycling ribosomes from one round of translation to another. This chain is Ribosome-recycling factor, found in Shouchella clausii (strain KSM-K16) (Alkalihalobacillus clausii).